A 253-amino-acid polypeptide reads, in one-letter code: uncharacterized protein (253 aa).

Positions 1 to 16 are cleaved as a signal peptide; that stretch reads MCVVYRTSVLILLASG. Cys-17 carries N-palmitoyl cysteine lipidation. Cys-17 carries the S-diacylglycerol cysteine lipid modification.

The protein belongs to the staphylococcal tandem lipoprotein family.

It is found in the cell membrane. This is an uncharacterized protein from Staphylococcus aureus (strain N315).